The primary structure comprises 210 residues: MANASYNVWSPLIRASCLDKKATYLIDPDDFIDKLTLTPYTVFYNGGVLVKISGLRLYMLLTAPPTINEIKNSNFKKRSKRNICMKECVEGKKNVVDMLNNKINMPPCIKKILNDLKENNVPRGGMYRKRFILNCYIANVVSCAKCENRCLIKALTHFYNHDSKCVGEVMHLLIKSQDVYKPPNCQKMKTVDKLCPFAGNCKGLNPICNY.

This sequence belongs to the baculoviridae LEF-2 family. As to quaternary structure, interacts with the DNA primase.

The protein localises to the virion. It localises to the host nucleus. It is found in the host cytoplasm. Plays an essential role in viral DNA replication. Does not seem to participate in the initiation step but is rather important for the amplification of DNA. Also required for expression from the vp39 and polh promoters. The sequence is that of Primase-associated factor LEF-2 (LEF-2) from Autographa californica nuclear polyhedrosis virus (AcMNPV).